The following is a 500-amino-acid chain: NAD(P)H-quinone oxidoreductase chain 4, chloroplastic (500 aa).

The next 14 helical transmembrane spans lie at 4–24 (FPWL…IFFL), 35–55 (YTIC…CYHF), 87–107 (IGPI…AWPV), 113–130 (LFHF…GSFS), 134–154 (LLLF…LLCM), 167–187 (FILY…GLAL), 208–228 (VLEI…SPII), 242–262 (HYST…YGLI), 274–294 (SIFS…AALT), 305–325 (IAYS…SLTD), 330–350 (GALL…FLAG), 386–406 (LALP…GIIT), 411–431 (LLIP…LTPI), and 462–482 (LFLS…PDFV).

The protein belongs to the complex I subunit 4 family.

Its subcellular location is the plastid. It is found in the chloroplast thylakoid membrane. It catalyses the reaction a plastoquinone + NADH + (n+1) H(+)(in) = a plastoquinol + NAD(+) + n H(+)(out). It carries out the reaction a plastoquinone + NADPH + (n+1) H(+)(in) = a plastoquinol + NADP(+) + n H(+)(out). This is NAD(P)H-quinone oxidoreductase chain 4, chloroplastic (ndhD) from Nicotiana tabacum (Common tobacco).